We begin with the raw amino-acid sequence, 359 residues long: Phospho-N-acetylmuramoyl-pentapeptide-transferase (359 aa).

10 consecutive transmembrane segments (helical) span residues 3 to 23 (QILIAVAVAVTVSILLTPVLI), 55 to 75 (VAILAGIWAGYLGAHLAGLAF), 80 to 100 (IGASGLLVLGLATALGGVGFI), 117 to 137 (TAKTVGQITSAVLFGVLVLQF), 156 to 176 (IATVTLAPVLFVLFCVVIVSA), 187 to 207 (LDGLAAGTMAMVTAAYVLITF), 231 to 251 (LALIAAATAGACIGFLWWNAA), 255 to 275 (IFMGDTGSLALGGVIAGLSVT), 280 to 300 (ILAVVLGALFVAEITSVVLQI), and 334 to 354 (FWLLTAITCGLGVALFYGEWL).

This sequence belongs to the glycosyltransferase 4 family. MraY subfamily. It depends on Mg(2+) as a cofactor.

It localises to the cell membrane. The enzyme catalyses UDP-N-acetyl-alpha-D-muramoyl-L-alanyl-gamma-D-glutamyl-meso-2,6-diaminopimeloyl-D-alanyl-D-alanine + di-trans,octa-cis-undecaprenyl phosphate = di-trans,octa-cis-undecaprenyl diphospho-N-acetyl-alpha-D-muramoyl-L-alanyl-D-glutamyl-meso-2,6-diaminopimeloyl-D-alanyl-D-alanine + UMP. It functions in the pathway cell wall biogenesis; peptidoglycan biosynthesis. Catalyzes the initial step of the lipid cycle reactions in the biosynthesis of the cell wall peptidoglycan: transfers peptidoglycan precursor phospho-MurNAc-pentapeptide from UDP-MurNAc-pentapeptide onto the lipid carrier undecaprenyl phosphate, yielding undecaprenyl-pyrophosphoryl-MurNAc-pentapeptide, known as lipid I. This chain is Phospho-N-acetylmuramoyl-pentapeptide-transferase, found in Mycobacterium tuberculosis (strain ATCC 25177 / H37Ra).